The following is a 757-amino-acid chain: uncharacterized protein (757 aa).

This is an uncharacterized protein from Dictyostelium discoideum (Social amoeba).